The sequence spans 145 residues: Cuticle protein 7 (145 aa).

A Chitin-binding type R&amp;R domain is found at 41–114 (PVNVATSYHA…VASNALPVGP (74 aa)).

This is Cuticle protein 7 from Blaberus craniifer (Death's head cockroach).